A 177-amino-acid chain; its full sequence is Translation initiation factor IF-3 (177 aa).

Belongs to the IF-3 family. As to quaternary structure, monomer.

It is found in the cytoplasm. In terms of biological role, IF-3 binds to the 30S ribosomal subunit and shifts the equilibrium between 70S ribosomes and their 50S and 30S subunits in favor of the free subunits, thus enhancing the availability of 30S subunits on which protein synthesis initiation begins. The chain is Translation initiation factor IF-3 from Nostoc sp. (strain PCC 7120 / SAG 25.82 / UTEX 2576).